The primary structure comprises 914 residues: Neuropilin-1 (914 aa).

A signal peptide spans 1 to 18; that stretch reads MDWGLFLHCAALTFTLSR. Residues 20 to 847 lie on the Extracellular side of the membrane; it reads LRSDKCGDTI…PGNVLKTLDP (828 aa). 3 disulfides stabilise this stretch: Cys25–Cys52, Cys80–Cys102, and Cys145–Cys171. CUB domains are found at residues 25 to 139 and 145 to 263; these read CGDT…YEVF and CSRN…YSVS. Asn148 carries an N-linked (GlcNAc...) asparagine glycan. Glu193, Asp207, and Asp248 together coordinate Ca(2+). Cysteines 204 and 226 form a disulfide. Asn259 carries an N-linked (GlcNAc...) asparagine glycan. 2 disulfide bridges follow: Cys273/Cys422 and Cys429/Cys581. F5/8 type C domains lie at 273-422 and 429-581; these read CMEP…VYGC and CSGM…LLGC. N-linked (GlcNAc...) asparagine glycosylation occurs at Asn520. Ser610 carries O-linked (Xyl...) (chondroitin sulfate) serine; alternate glycosylation. Ser610 is a glycosylation site (O-linked (Xyl...) (heparan sulfate) serine; alternate). The MAM domain occupies 636 to 801; the sequence is PYNLNCGFGW…NHISQEDCQK (166 aa). Positions 809–829 are disordered; it reads IVEEDPESNQTGFTPSYRTDE. The segment covering 816–825 has biased composition (polar residues); the sequence is SNQTGFTPSY. N-linked (GlcNAc...) asparagine glycosylation is present at Asn817. Residues 848-870 form a helical membrane-spanning segment; it reads ILITIIAMSALGVLLGAICGVVL. Topologically, residues 871 to 914 are cytoplasmic; sequence YCACWHNGMSERNLSALENYNFELVDGVKLKKDKLNTQNSYSEA.

The protein belongs to the neuropilin family. In terms of assembly, homodimer, and heterodimer. Developing nervous system; optic tectum (layers D and E of SGFS), amacrine cells of retina, neurites of dorsal root ganglia. Also expressed in non-neuronal cells, e.g. blood vessels in the entire embryo.

It is found in the mitochondrion membrane. Its subcellular location is the cell membrane. In terms of biological role, receptor involved in the development of the cardiovascular system, in angiogenesis, in the formation of certain neuronal circuits and in organogenesis outside the nervous system. Mediates the chemorepulsant activity of semaphorins. Binding to VEGFA initiates a signaling pathway needed for motor neuron axon guidance and cell body migration, including for the caudal migration of facial motor neurons from rhombomere 4 to rhombomere 6 during embryonic development. Regulates mitochondrial iron transport via interaction. The chain is Neuropilin-1 (NRP1) from Gallus gallus (Chicken).